A 204-amino-acid polypeptide reads, in one-letter code: Small ribosomal subunit protein uS7 (204 aa).

N-acetylmethionine is present on Met-1. An N-acetylthreonine; in 40S ribosomal protein S5, N-terminally processed modification is found at Thr-2. Thr-14 is subject to Phosphothreonine. At Lys-47 the chain carries N6-acetyllysine; alternate. Residue Lys-47 forms a Glycyl lysine isopeptide (Lys-Gly) (interchain with G-Cter in SUMO2); alternate linkage. Ser-142 carries the post-translational modification Phosphoserine.

This sequence belongs to the universal ribosomal protein uS7 family. As to quaternary structure, component of the small ribosomal subunit. Part of the small subunit (SSU) processome, composed of more than 70 proteins and the RNA chaperone small nucleolar RNA (snoRNA) U3.

The protein resides in the cytoplasm. Its subcellular location is the nucleus. The protein localises to the nucleolus. Functionally, component of the small ribosomal subunit. The ribosome is a large ribonucleoprotein complex responsible for the synthesis of proteins in the cell. Part of the small subunit (SSU) processome, first precursor of the small eukaryotic ribosomal subunit. During the assembly of the SSU processome in the nucleolus, many ribosome biogenesis factors, an RNA chaperone and ribosomal proteins associate with the nascent pre-rRNA and work in concert to generate RNA folding, modifications, rearrangements and cleavage as well as targeted degradation of pre-ribosomal RNA by the RNA exosome. The sequence is that of Small ribosomal subunit protein uS7 (RPS5) from Bos taurus (Bovine).